Here is a 208-residue protein sequence, read N- to C-terminus: uncharacterized protein (208 aa).

4 4Fe-4S ferredoxin-type domains span residues 59-88, 114-145, 147-176, and 174-203; these read GVLV…SVGT, GDLN…WQQK, GCIT…VNTE, and NTES…IIEW. Residues Cys-68, Cys-71, Cys-74, Cys-78, Cys-123, Cys-126, Cys-131, Cys-135, Cys-156, Cys-159, Cys-162, Cys-166, Cys-183, Cys-186, Cys-189, and Cys-193 each coordinate [4Fe-4S] cluster.

This is an uncharacterized protein from Escherichia coli O157:H7.